A 793-amino-acid chain; its full sequence is Phenylalanine--tRNA ligase beta subunit (793 aa).

A tRNA-binding domain is found at 39-148 (AGQFTHVIVA…DEAPIGMDLR (110 aa)). In terms of domain architecture, B5 spans 401 to 477 (PGTVSFLFDT…RLYGYDKLQA (77 aa)). D455, D461, E464, and E465 together coordinate Mg(2+). The 95-residue stretch at 698-792 (SKYPQIRRDL…LENEFSILLR (95 aa)) folds into the FDX-ACB domain.

Belongs to the phenylalanyl-tRNA synthetase beta subunit family. Type 1 subfamily. As to quaternary structure, tetramer of two alpha and two beta subunits. The cofactor is Mg(2+).

The protein localises to the cytoplasm. The enzyme catalyses tRNA(Phe) + L-phenylalanine + ATP = L-phenylalanyl-tRNA(Phe) + AMP + diphosphate + H(+). The polypeptide is Phenylalanine--tRNA ligase beta subunit (Legionella pneumophila (strain Lens)).